The primary structure comprises 445 residues: Serine--tRNA ligase (445 aa).

An L-serine-binding site is contributed by 229–231; sequence TAE. ATP is bound by residues 260 to 262 and Val-276; that span reads RKE. Glu-283 lines the L-serine pocket. 347–350 provides a ligand contact to ATP; that stretch reads EVSS. Residue Ser-383 coordinates L-serine.

Belongs to the class-II aminoacyl-tRNA synthetase family. Type-1 seryl-tRNA synthetase subfamily. As to quaternary structure, homodimer. The tRNA molecule binds across the dimer.

Its subcellular location is the cytoplasm. It catalyses the reaction tRNA(Ser) + L-serine + ATP = L-seryl-tRNA(Ser) + AMP + diphosphate + H(+). The catalysed reaction is tRNA(Sec) + L-serine + ATP = L-seryl-tRNA(Sec) + AMP + diphosphate + H(+). The protein operates within aminoacyl-tRNA biosynthesis; selenocysteinyl-tRNA(Sec) biosynthesis; L-seryl-tRNA(Sec) from L-serine and tRNA(Sec): step 1/1. In terms of biological role, catalyzes the attachment of serine to tRNA(Ser). Is also able to aminoacylate tRNA(Sec) with serine, to form the misacylated tRNA L-seryl-tRNA(Sec), which will be further converted into selenocysteinyl-tRNA(Sec). The protein is Serine--tRNA ligase of Thermomicrobium roseum (strain ATCC 27502 / DSM 5159 / P-2).